The sequence spans 645 residues: UvrABC system protein C (645 aa).

Residues 12-91 (TGPGVYLYKN…IKQRKPRFNV (80 aa)) enclose the GIY-YIG domain. A UVR domain is found at 202–237 (ADLERSLEVRMQEAAAAEQFELAAKYRDLLVTLHQL).

The protein belongs to the UvrC family. As to quaternary structure, interacts with UvrB in an incision complex.

It localises to the cytoplasm. Functionally, the UvrABC repair system catalyzes the recognition and processing of DNA lesions. UvrC both incises the 5' and 3' sides of the lesion. The N-terminal half is responsible for the 3' incision and the C-terminal half is responsible for the 5' incision. The chain is UvrABC system protein C from Acidobacterium capsulatum (strain ATCC 51196 / DSM 11244 / BCRC 80197 / JCM 7670 / NBRC 15755 / NCIMB 13165 / 161).